The sequence spans 835 residues: Prickle-like protein 1-A (835 aa).

The 109-residue stretch at 14–122 (FGCQRSSTSD…NIKMLSRAVM (109 aa)) folds into the PET domain. 3 consecutive LIM zinc-binding domains span residues 124-188 (ATCE…ELLK), 189-249 (PRCS…HYAE), and 250-313 (YCES…EDVH). Disordered stretches follow at residues 312 to 346 (VHAS…ADQC), 426 to 455 (LFQQ…QRNN), 603 to 706 (CQEK…RKRS), and 769 to 835 (CSSS…CIIS). Basic and acidic residues-rich tracts occupy residues 432–453 (EDNR…DLQR), 603–614 (CQEKPPPEEKPM), and 646–655 (EIRRPPMSER). Composition is skewed to basic residues over residues 669-683 (RPHH…KSRK) and 819-835 (SKSK…CIIS). C832 is subject to Cysteine methyl ester. Residue C832 is the site of S-farnesyl cysteine attachment. A propeptide spans 833–835 (IIS) (removed in mature form).

This sequence belongs to the prickle / espinas / testin family. In terms of assembly, interacts with dvl2/dsh and mapk8/jnk1. As to expression, expressed in the dorsal marginal zone of early gastrulae (stage 10). As gastrulation proceeds, expression expands to include the lateral and ventral marginal zones, excluding the few rows of cells above the blastopore lip. Expression moves dorsally with gastrulation cell movements, and by the end of gastrulation expression is seen in dorsal mesoderm and posterior but not anterior neural ectoderm. Expression becomes down-regulated in mesoderm but remains strong in posterior ectoderm through the neurula stages. During tailbud stages, expressed in the pronephric duct, tailbud, tailtip and forming somites. In the most posterior regions, expressed in notochord and in the floorplate of the neural tube with weak expression in the roofplate. At stage 30, expressed in a complex pattern in the head including strong expression in the lens and otic vesicle.

The protein resides in the cell membrane. Its function is as follows. Acts in a planar cell polarity (PCP) complex; polarization along the apical/basal axis of epithelial cells. Regulates the polarized assembly of fibronectrin on the surface of the mesoderm during gastrulation. Essential for gastrulation cell movements, cooperating with dvl2/dsh to activate jnk. Acts together with tes to control axial elongation. The protein is Prickle-like protein 1-A (prickle1-a) of Xenopus laevis (African clawed frog).